Here is a 92-residue protein sequence, read N- to C-terminus: Small ribosomal subunit protein uS19c (92 aa).

It belongs to the universal ribosomal protein uS19 family.

The protein resides in the plastid. The protein localises to the chloroplast. Its function is as follows. Protein S19 forms a complex with S13 that binds strongly to the 16S ribosomal RNA. The protein is Small ribosomal subunit protein uS19c of Liriodendron tulipifera (Tuliptree).